Here is a 395-residue protein sequence, read N- to C-terminus: Calcium sensing receptor, chloroplastic (395 aa).

Over residues 1 to 12 (MAPVPVSVSATL) the composition is skewed to low complexity. The tract at residues 1-27 (MAPVPVSVSATLAPPPAAPPKTTSRSW) is disordered. Residues 1–39 (MAPVPVSVSATLAPPPAAPPKTTSRSWERRAPADAAFAA) constitute a chloroplast transit peptide. Residues 40–182 (ASSVAGSAAL…TITSLGPEDY (143 aa)) are Lumenal, thylakoid-facing. Residues 183 to 203 (VVAAGXAFLAYLLVPPVWSLV) traverse the membrane as a helical segment. Residues 204-395 (SSSLRGYKGD…TRKLLPGGVD (192 aa)) are Stromal-facing. In terms of domain architecture, Rhodanese spans 224 to 345 (TTQGYVLIDV…WAQSRLGTDS (122 aa)). Thr377 bears the Phosphothreonine mark.

In terms of processing, phosphorylated in both bundle sheath and mesophyll cells, under both low and high light regimes (70 vs 900 umol photons/m-2/s).

It is found in the plastid. The protein localises to the chloroplast thylakoid membrane. Its function is as follows. Modulates cytoplasmic Ca(2+) concentration and is crucial for proper stomatal regulation in response to elevated levels of external Ca(2+). May function by regulating concentrations of inositol 1,4,5-trisphosphate (IP3), which in turn triggers release of Ca(2+) from internal stores. May play a role in de-etiolation. This chain is Calcium sensing receptor, chloroplastic, found in Zea mays (Maize).